The primary structure comprises 340 residues: Photosystem II assembly lipoprotein Ycf48 (340 aa).

A signal peptide spans 1–26 (MTSVLGLLKPLKKAIAAIAVLVLCIG). The N-palmitoyl cysteine moiety is linked to residue Cys-27. Cys-27 carries S-diacylglycerol cysteine lipidation.

Belongs to the Ycf48 family. As to quaternary structure, part of early PSII assembly complexes which includes D1 (psbA) and PsbI; not found in mature PSII. Binds to the lumenal side of PSII complexes. Interacts with YidC.

It localises to the cellular thylakoid membrane. Its function is as follows. A factor required for optimal assembly of photosystem II (PSII), acting in the early stages of PSII assembly. Also plays a role in replacement of photodamaged D1 (psbA). Assists YidC in synthesis of chlorophyll-binding proteins. This Picosynechococcus sp. (strain ATCC 27264 / PCC 7002 / PR-6) (Agmenellum quadruplicatum) protein is Photosystem II assembly lipoprotein Ycf48.